Here is a 124-residue protein sequence, read N- to C-terminus: Ribonuclease pancreatic (124 aa).

The segment covering 1–13 (KESAAAKFERQHI) has biased composition (basic and acidic residues). The tract at residues 1–23 (KESAAAKFERQHIDSSTSSVSSS) is disordered. The substrate site is built by lysine 7 and arginine 10. The active-site Proton acceptor is the histidine 12. 4 disulfide bridges follow: cysteine 26/cysteine 84, cysteine 40/cysteine 95, cysteine 58/cysteine 110, and cysteine 65/cysteine 72. The N-linked (GlcNAc...) asparagine glycan is linked to asparagine 34. Residues 41 to 45 (KPVNT), lysine 66, and arginine 85 each bind substrate. The active-site Proton donor is histidine 119.

Belongs to the pancreatic ribonuclease family. As to quaternary structure, monomer. Interacts with and forms tight 1:1 complexes with RNH1. Dimerization of two such complexes may occur. Interaction with RNH1 inhibits this protein. Pancreas.

It is found in the secreted. The catalysed reaction is an [RNA] containing cytidine + H2O = an [RNA]-3'-cytidine-3'-phosphate + a 5'-hydroxy-ribonucleotide-3'-[RNA].. It carries out the reaction an [RNA] containing uridine + H2O = an [RNA]-3'-uridine-3'-phosphate + a 5'-hydroxy-ribonucleotide-3'-[RNA].. Endonuclease that catalyzes the cleavage of RNA on the 3' side of pyrimidine nucleotides. Acts on single-stranded and double-stranded RNA. In Giraffa camelopardalis (Giraffe), this protein is Ribonuclease pancreatic (RNASE1).